The sequence spans 300 residues: B1 kinase (300 aa).

One can recognise a Protein kinase domain in the interval Trp-16–Phe-282. ATP contacts are provided by residues Ile-22–Ile-30 and Lys-45. Asn-147 (proton acceptor) is an active-site residue.

Belongs to the protein kinase superfamily. Ser/Thr protein kinase family. Poxviruses subfamily. In terms of assembly, interacts with host JIP1; this interaction increases the amount of MAPK bound to JIP1 and subsequently increases the activity of transcription factors, such as JUN, that respond to these complexes. Interacts with protein OPG198; this interaction inhibits the repressive activity of OPG198 pseudokinase on viral replication factory formation. Mg(2+) is required as a cofactor. In terms of processing, autophosphorylated.

Its subcellular location is the virion. It is found in the host cytoplasm. The catalysed reaction is L-seryl-[protein] + ATP = O-phospho-L-seryl-[protein] + ADP + H(+). The enzyme catalyses L-threonyl-[protein] + ATP = O-phospho-L-threonyl-[protein] + ADP + H(+). In terms of biological role, essential serine/threonine-protein kinase that plays different role in the viral life cycle. Phosphorylates the host small ribosomal protein RACK1 thereby customizing the ribosomes to a state optimal for viral mRNAs (which contain poly-A leaders) but not for host mRNAs. Facilitates viral DNA replication by inhibiting host BANF1, a cellular host defense responsive to foreign DNA. Phosphorylates host BANF1 on serine and threonine residues; this leads to BANF1 relocalization to the cytoplasm, loss of dimerization and impaired DNA binding activity. Indeed, BANF1 activity depends on its DNA-binding property which is blocked by VPK1-mediated phosphorylation. Required for viral intermediate genes expression, probably by inhibiting host BANF1. Modulates cellular responses via host JUN by two different mechanisms, either by direct phosphorylation or by modulation of upstream JIP1-MAPK complexes. Seems to participate in the accumulation/processing of late proteins and thus in virion maturation. In addition, inhibits B12 repressive activity on viral DNA replication via a phosphorylation-dependent mechanism. The polypeptide is B1 kinase (OPG187) (Homo sapiens (Human)).